A 246-amino-acid chain; its full sequence is Probable transcriptional regulatory protein HSM_1763 (246 aa).

It belongs to the TACO1 family.

The protein localises to the cytoplasm. In Histophilus somni (strain 2336) (Haemophilus somnus), this protein is Probable transcriptional regulatory protein HSM_1763.